The sequence spans 481 residues: MIMEFEFSKMLEEVLTWIVAHLDGPLWDATIIILLGTGLFFTITTGFVQFRLFPASLREMWFGRSVEGSSLTPFQAFTTGLASRVGVGNIGGVATAIALGGEGAVFWMWVTAFIGMSSAFAESTLAQLFKIQDKDGSFRGGPAYYIVQGLKSRCMAVAFALALIFTFGFAFNSVQANSIVEATSNAWNWKGEYVGISLVIFTALIIFGGVKRIAIISSNLVPMMALFYLIMAVIILGMHIDMIPSVIHRIVQSAFSFDAAAGGMFGALVSKAMMMGIKRGLFSNEAGMGSAPNSAAAAHVKHPVSQGLVQMLGVFVDTMIVCTCTAVIILLSNNYGSETLKSISLTQNALQYHIGEFGAHFLAFILLLFAYSSIIGNYAYAESNIRFIKNKPWLVLLFRLMVLFFVYFGAVRSGNVVWNFADTVMAVMAIINLIAILMLSPIVWKLMKDYQRQLKEGKTPEFKIDEYPELRKKIFDSRIWK.

10 consecutive transmembrane segments (helical) span residues 30–50 (TIIILLGTGLFFTITTGFVQF), 96–116 (AIALGGEGAVFWMWVTAFIGM), 154–174 (CMAVAFALALIFTFGFAFNSV), 196–216 (ISLVIFTALIIFGGVKRIAII), 220–240 (LVPMMALFYLIMAVIILGMHI), 250–270 (IVQSAFSFDAAAGGMFGALVS), 311–331 (MLGVFVDTMIVCTCTAVIILL), 354–374 (IGEFGAHFLAFILLLFAYSSI), 391–411 (KPWLVLLFRLMVLFFVYFGAV), and 424–444 (VMAVMAIINLIAILMLSPIVW).

The protein belongs to the alanine or glycine:cation symporter (AGCS) (TC 2.A.25) family.

The protein resides in the cell inner membrane. This is an uncharacterized protein from Haemophilus influenzae (strain ATCC 51907 / DSM 11121 / KW20 / Rd).